Here is a 65-residue protein sequence, read N- to C-terminus: Small ribosomal subunit protein bS21 (65 aa).

A disordered region spans residues G45 to S65. Basic residues predominate over residues K48–Q57.

The protein belongs to the bacterial ribosomal protein bS21 family.

The sequence is that of Small ribosomal subunit protein bS21 from Chlorobium phaeobacteroides (strain DSM 266 / SMG 266 / 2430).